The primary structure comprises 461 residues: Photosystem II CP43 reaction center protein (461 aa).

Positions 1–2 are excised as a propeptide; the sequence is ME. Thr-3 bears the N-acetylthreonine mark. Thr-3 carries the post-translational modification Phosphothreonine. The next 5 membrane-spanning stretches (helical) occupy residues 57-81, 122-143, 166-188, 243-263, and 279-300; these read LFEVAHFVPEKPMYEQGLILLPHLA, LLGPETLEESFPFFGYVWKDRN, KALYFGGVYDTWAPGGGDVRKIT, KPFAWARRALVWSGEAYLSYS, and WFNNTAYPSEFYGPTGPEASQA. A [CaMn4O5] cluster-binding site is contributed by Glu-355. The chain crosses the membrane as a helical span at residues 435–459; the sequence is RARAAAAGFEKGIDRDFEPVLSMTP.

The protein belongs to the PsbB/PsbC family. PsbC subfamily. PSII is composed of 1 copy each of membrane proteins PsbA, PsbB, PsbC, PsbD, PsbE, PsbF, PsbH, PsbI, PsbJ, PsbK, PsbL, PsbM, PsbT, PsbX, PsbY, PsbZ, Psb30/Ycf12, at least 3 peripheral proteins of the oxygen-evolving complex and a large number of cofactors. It forms dimeric complexes. Binds multiple chlorophylls and provides some of the ligands for the Ca-4Mn-5O cluster of the oxygen-evolving complex. It may also provide a ligand for a Cl- that is required for oxygen evolution. PSII binds additional chlorophylls, carotenoids and specific lipids. serves as cofactor.

The protein localises to the plastid. The protein resides in the chloroplast thylakoid membrane. One of the components of the core complex of photosystem II (PSII). It binds chlorophyll and helps catalyze the primary light-induced photochemical processes of PSII. PSII is a light-driven water:plastoquinone oxidoreductase, using light energy to abstract electrons from H(2)O, generating O(2) and a proton gradient subsequently used for ATP formation. The polypeptide is Photosystem II CP43 reaction center protein (Platanus occidentalis (Sycamore)).